The following is a 62-amino-acid chain: Large ribosomal subunit protein eL24 (62 aa).

Positions 7, 10, 33, and 37 each coordinate Zn(2+). The C4-type zinc-finger motif lies at 7 to 37; the sequence is CDYCGDDIEPGTGTMFVHNDGSTVHFCSAKC.

The protein belongs to the eukaryotic ribosomal protein eL24 family. Part of the 50S ribosomal subunit. Forms a cluster with proteins L3 and L14. Zn(2+) is required as a cofactor.

In terms of biological role, binds to the 23S rRNA. The chain is Large ribosomal subunit protein eL24 from Halobacterium salinarum (strain ATCC 29341 / DSM 671 / R1).